A 417-amino-acid chain; its full sequence is 4-hydroxy-3-methylbut-2-en-1-yl diphosphate synthase (flavodoxin) (417 aa).

[4Fe-4S] cluster contacts are provided by C305, C308, C351, and E358.

Belongs to the IspG family. [4Fe-4S] cluster is required as a cofactor.

It carries out the reaction (2E)-4-hydroxy-3-methylbut-2-enyl diphosphate + oxidized [flavodoxin] + H2O + 2 H(+) = 2-C-methyl-D-erythritol 2,4-cyclic diphosphate + reduced [flavodoxin]. It functions in the pathway isoprenoid biosynthesis; isopentenyl diphosphate biosynthesis via DXP pathway; isopentenyl diphosphate from 1-deoxy-D-xylulose 5-phosphate: step 5/6. Converts 2C-methyl-D-erythritol 2,4-cyclodiphosphate (ME-2,4cPP) into 1-hydroxy-2-methyl-2-(E)-butenyl 4-diphosphate. The polypeptide is 4-hydroxy-3-methylbut-2-en-1-yl diphosphate synthase (flavodoxin) (Nitrosomonas europaea (strain ATCC 19718 / CIP 103999 / KCTC 2705 / NBRC 14298)).